Here is a 273-residue protein sequence, read N- to C-terminus: Ribosomal RNA small subunit methyltransferase A (273 aa).

Positions 18, 20, 45, 66, 91, and 113 each coordinate S-adenosyl-L-methionine.

It belongs to the class I-like SAM-binding methyltransferase superfamily. rRNA adenine N(6)-methyltransferase family. RsmA subfamily.

It localises to the cytoplasm. It carries out the reaction adenosine(1518)/adenosine(1519) in 16S rRNA + 4 S-adenosyl-L-methionine = N(6)-dimethyladenosine(1518)/N(6)-dimethyladenosine(1519) in 16S rRNA + 4 S-adenosyl-L-homocysteine + 4 H(+). Specifically dimethylates two adjacent adenosines (A1518 and A1519) in the loop of a conserved hairpin near the 3'-end of 16S rRNA in the 30S particle. May play a critical role in biogenesis of 30S subunits. The chain is Ribosomal RNA small subunit methyltransferase A from Erwinia tasmaniensis (strain DSM 17950 / CFBP 7177 / CIP 109463 / NCPPB 4357 / Et1/99).